Consider the following 221-residue polypeptide: Endonuclease V (221 aa).

Mg(2+) is bound by residues aspartate 43 and aspartate 109.

The protein belongs to the endonuclease V family. It depends on Mg(2+) as a cofactor.

It localises to the cytoplasm. The catalysed reaction is Endonucleolytic cleavage at apurinic or apyrimidinic sites to products with a 5'-phosphate.. DNA repair enzyme involved in the repair of deaminated bases. Selectively cleaves double-stranded DNA at the second phosphodiester bond 3' to a deoxyinosine leaving behind the intact lesion on the nicked DNA. The protein is Endonuclease V of Petrotoga mobilis (strain DSM 10674 / SJ95).